Reading from the N-terminus, the 72-residue chain is Prophage late control protein OgrK (72 aa).

Cryptic version of the phage P2 OGR protein which acts as an activator of P2 late transcription. In Escherichia coli (strain K12), this protein is Prophage late control protein OgrK (ogrK).